The chain runs to 2067 residues: Dedicator of cytokinesis protein 11 (2067 aa).

The region spanning 162 to 269 is the PH domain; it reads GVMKQGWLQK…WVNTIKQALL (108 aa). A disordered region spans residues 274-302; the sequence is DRRNGSETSEGSLDDDSSSQGKPESITES. A compositionally biased stretch (polar residues) spans 291 to 302; that stretch reads SSQGKPESITES. Positions 643–820 constitute a C2 DOCK-type domain; sequence NNHLYIYPQQ…PLFKVRAYVA (178 aa). Positions 1224–1267 are disordered; the sequence is SSTIVDKEPSGSVTQNGLSRRGESRGSMYGDPGTPDINELHRRG. The DOCKER domain maps to 1614–2040; the sequence is RSYASTPELR…LSEIIHEQIF (427 aa).

It belongs to the DOCK family.

Its function is as follows. Guanine nucleotide-exchange factor (GEF) that activates CDC42 by exchanging bound GDP for free GTP. In Danio rerio (Zebrafish), this protein is Dedicator of cytokinesis protein 11.